Reading from the N-terminus, the 187-residue chain is Elongation factor P (187 aa).

The protein belongs to the elongation factor P family.

The protein localises to the cytoplasm. The protein operates within protein biosynthesis; polypeptide chain elongation. Functionally, involved in peptide bond synthesis. Stimulates efficient translation and peptide-bond synthesis on native or reconstituted 70S ribosomes in vitro. Probably functions indirectly by altering the affinity of the ribosome for aminoacyl-tRNA, thus increasing their reactivity as acceptors for peptidyl transferase. In Frankia casuarinae (strain DSM 45818 / CECT 9043 / HFP020203 / CcI3), this protein is Elongation factor P.